The following is a 396-amino-acid chain: Decapping nuclease RAI1 (396 aa).

107–109 (YRG) is a substrate binding site. Residue glutamate 179 participates in a divalent metal cation binding. A substrate-binding site is contributed by glutamate 228. A divalent metal cation is bound by residues aspartate 230, glutamate 249, and leucine 250. Lysine 251 and glutamine 275 together coordinate substrate.

Belongs to the DXO/Dom3Z family. Interacts with RAT1; the interaction is direct, stabilizes RAT1 protein structure and stimulates its exoribonuclease activity. The interaction also stimulates RAI1 pyrophosphohydrolase activity, probably by recruiting it to mRNA substrates. A divalent metal cation serves as cofactor.

The protein resides in the nucleus. The catalysed reaction is a 5'-end NAD(+)-phospho-ribonucleoside in mRNA + H2O = a 5'-end phospho-ribonucleoside in mRNA + NAD(+) + H(+). It catalyses the reaction a 5'-end (N(7)-methyl 5'-triphosphoguanosine)-ribonucleoside-ribonucleotide in mRNA + H2O = a (N(7)-methyl 5'-triphosphoguanosine)-nucleoside + a 5'-end phospho-ribonucleoside in mRNA + H(+). The enzyme catalyses a 5'-end triphospho-ribonucleoside in mRNA + H2O = a 5'-end phospho-ribonucleoside in mRNA + diphosphate + H(+). Decapping enzyme for NAD-capped RNAs: specifically hydrolyzes the nicotinamide adenine dinucleotide (NAD) cap from a subset of RNAs by removing the entire NAD moiety from the 5'-end of an NAD-capped RNA. The NAD-cap is present at the 5'-end of some RNAs and snoRNAs. In contrast to the canonical 5'-end N7 methylguanosine (m7G) cap, the NAD cap promotes mRNA decay. Also acts as a non-canonical decapping enzyme that removes the entire cap structure of m7G capped or incompletely capped RNAs. Has decapping activity toward incomplete 5'-end m7G cap mRNAs such as unmethylated 5'-end-capped RNA (cap0), while it has no activity toward 2'-O-ribose methylated m7G cap (cap1). Also possesses RNA 5'-pyrophosphohydrolase activity by hydrolyzing the 5'-end triphosphate to release pyrophosphates. Stimulates exoribonuclease activity of Rat1, allowing it to degrade RNAs with stable secondary structure more effectively. This is Decapping nuclease RAI1 from Scheffersomyces stipitis (strain ATCC 58785 / CBS 6054 / NBRC 10063 / NRRL Y-11545) (Yeast).